A 637-amino-acid polypeptide reads, in one-letter code: ATP-dependent rRNA helicase SPB4 (637 aa).

The Q motif motif lies at 10 to 38 (WENLRVDLEPWLKDAIRSLNYPTMTPVQA). A Helicase ATP-binding domain is found at 41–236 (IPLLSGNKDV…RTGMNNPVKL (196 aa)). Residue 54–61 (AVTGSGKT) participates in ATP binding. Positions 184–187 (DEAD) match the DEAD box motif. The region spanning 266–444 (KLTTMLQMLR…KFQKKLRKYM (179 aa)) is the Helicase C-terminal domain. A coiled-coil region spans residues 528–597 (SAEKARLENL…QLEAEQERGG (70 aa)). A disordered region spans residues 554–637 (LKVKNEAWSS…GVLQGSFDDL (84 aa)). 2 stretches are compositionally biased toward basic and acidic residues: residues 564–576 (KTEK…ERKE) and 583–598 (EAIE…RGGL). Positions 621 to 630 (NGGGGGGGVL) are enriched in gly residues.

Belongs to the DEAD box helicase family. DDX55/SPB4 subfamily. Component of pre-60S ribosomal complexes.

It localises to the nucleus. The protein resides in the nucleolus. The enzyme catalyses ATP + H2O = ADP + phosphate + H(+). ATP-binding RNA helicase involved in the biogenesis of 60S ribosomal subunits. Binds 90S pre-ribosomal particles and dissociates from pre-60S ribosomal particles after processing of 27SB pre-rRNA. Required for the normal formation of 18S rRNA through the processing of pre-rRNAs at sites A0, A1 and A2, and the normal formation of 25S and 5.8S rRNAs through the processing of pre-rRNAs at sites C1 and C2. This chain is ATP-dependent rRNA helicase SPB4, found in Lodderomyces elongisporus (strain ATCC 11503 / CBS 2605 / JCM 1781 / NBRC 1676 / NRRL YB-4239) (Yeast).